Here is a 746-residue protein sequence, read N- to C-terminus: Protein psiN (746 aa).

Residues 1–23 form the signal peptide; the sequence is MGNINKKLFYFLIQLITILIVLS. Residues 24–679 lie on the Extracellular side of the membrane; it reads DDSYNSLLPL…KCQSAAVKAA (656 aa). N-linked (GlcNAc...) asparagine glycans are attached at residues Asn97 and Asn124. The PA14 domain maps to 125–276; sequence VTSDDPRIYS…YDYCGVCEGM (152 aa). Residues Asn319, Asn353, Asn380, Asn477, Asn553, Asn628, and Asn654 are each glycosylated (N-linked (GlcNAc...) asparagine). The helical transmembrane segment at 680 to 700 threads the bilayer; sequence VGVGAGAAAGIAIGGAIALGL. The Cytoplasmic segment spans residues 701–746; it reads AAFGGKRGYDAWKSSRDNQIQTSSENPLYNPNPNQGDNPLYAANNS. Residues 714-746 are disordered; sequence SSRDNQIQTSSENPLYNPNPNQGDNPLYAANNS. A compositionally biased stretch (polar residues) spans 717–746; the sequence is DNQIQTSSENPLYNPNPNQGDNPLYAANNS.

Belongs to the prespore-cell-inducing factor family.

It localises to the membrane. The protein is Protein psiN (psiN) of Dictyostelium discoideum (Social amoeba).